A 452-amino-acid polypeptide reads, in one-letter code: MFGRVFIVAVLYCITICKGEDPTNSSTPKLILLSFDGFRADYLTRFPMPNLQEFMKEGVEVEEVKNVFITKTFPNHYSLVTGLYAESHGIVANRMYDADTKQVFHMNDSHSKWWDEATPIWLTNQKQGHRSGCAMWPGSDVSIHNTTPSDFLYYNHTVSFAQRVNHITTWLTRPNDSINFAAIYWEEPDASGHRYGPDDYGNMSGVLKEVDKNVGYLMSELKKANLWDTVNVIITSDHGMAQCSNDRIIKLNDCIGPGNYTLVDDNPVASILPISDTKNVYDLLRNCHPHMKVYMKEEIPDRWHYKHNSRIQPLLLVADEGWMITQNESISMLGDHGYDNDLHSMHPFLAAHGPAFRKSYKMRTINNVDVYPMMCLILGITGQPNNGTLSNTKCLLANQWCIQVSEAIGIVIGAIMVLTTLTCIIIMLKKKMPSARPFSRLQFQDDDDPLIG.

An N-terminal signal peptide occupies residues 1 to 19 (MFGRVFIVAVLYCITICKG). Topologically, residues 20 to 407 (EDPTNSSTPK…NQWCIQVSEA (388 aa)) are extracellular. N-linked (GlcNAc...) asparagine glycosylation occurs at N24. Residues D36 and T72 each coordinate Zn(2+). The active-site AMP-threonine intermediate is T72. A substrate-binding site is contributed by N93. N107 is a glycosylation site (N-linked (GlcNAc...) asparagine). Residue Y154 coordinates substrate. Residues N155 and N175 are each glycosylated (N-linked (GlcNAc...) asparagine). Zn(2+)-binding residues include D189 and H193. Substrate is bound at residue D189. Residue N202 is glycosylated (N-linked (GlcNAc...) asparagine). Zn(2+) is bound by residues D237 and H238. Cysteines 254 and 287 form a disulfide. N-linked (GlcNAc...) asparagine glycosylation is found at N259 and N327. Zn(2+) is bound at residue H336. Residue N386 is glycosylated (N-linked (GlcNAc...) asparagine). C394 and C401 form a disulfide bridge. Residues 408–428 (IGIVIGAIMVLTTLTCIIIML) traverse the membrane as a helical segment. Topologically, residues 429-452 (KKKMPSARPFSRLQFQDDDDPLIG) are cytoplasmic.

This sequence belongs to the nucleotide pyrophosphatase/phosphodiesterase family. Zn(2+) is required as a cofactor.

It localises to the cell membrane. The enzyme catalyses P(1),P(3)-bis(5'-adenosyl) triphosphate + H2O = AMP + ADP + 2 H(+). In terms of biological role, hydrolyzes extracellular Ap3A into AMP and ADP, and Ap4A into AMP and ATP. Ap3A and Ap4A are diadenosine polyphosphates thought to induce proliferation of vascular smooth muscle cells. Acts as a procoagulant, mediating platelet aggregation at the site of nascent thrombus via release of ADP from Ap3A and activation of ADP receptors. This chain is Bis(5'-adenosyl)-triphosphatase enpp4 (enpp4), found in Xenopus laevis (African clawed frog).